We begin with the raw amino-acid sequence, 259 residues long: MQIALLSEDPNRQSELEAIATRWGLEHDEDNVFALVLTDKQLELRKRDEPKLGAIFVDLVSGAVAHRRKFGGGKGQSIAKAVGLNKGATPIVLDGTAGLGRDAFVLASLGCKVQMVERHPVVAALLDDGLARAKQDAEIGVWVAERMSLLHASSHDALEQLMAQDDFVQPDVVYLDPMYPHPVNKKKSALVKKEMRVFQSLVGADNDADALLAPALSMATKRVVVKRPDYAEWLDNQKPSMAIETKKNRFDVYVNAAMA.

S-adenosyl-L-methionine is bound by residues 101–102 (RD), 117–118 (ER), 153–154 (SS), and Asp176.

Belongs to the methyltransferase superfamily. RsmJ family.

Its subcellular location is the cytoplasm. It carries out the reaction guanosine(1516) in 16S rRNA + S-adenosyl-L-methionine = N(2)-methylguanosine(1516) in 16S rRNA + S-adenosyl-L-homocysteine + H(+). Its function is as follows. Specifically methylates the guanosine in position 1516 of 16S rRNA. The protein is Ribosomal RNA small subunit methyltransferase J of Aliivibrio fischeri (strain ATCC 700601 / ES114) (Vibrio fischeri).